The chain runs to 3298 residues: MQKELGIVPSCPGMKSPRPHLLLPLLLLLLLLLGAGVPGAWGQAGSLDLQIDEEQPAGTLIGDISAGLPAGTAAPLMYFISAQEGSGVGTDLAIDEHSGVVRTARVLDREQRDRYRFTAVTPDGATVEVTVRVADINDHAPAFPQARAALQVPEHTAFGTRYPLEPARDADAGRLGTQGYALSGDGAGETFRLETRPGPDGTPVPELVVTGELDRENRSHYMLQLEAYDGGSPPRRAQALLDVTLLDINDHAPAFNQSRYHAVVSESLAPGSPVLQVFASDADAGVNGAVTYEINRRQSEGDGPFSIDAHTGLLQLERPLDFEQRRVHELVVQARDGGAHPELGSAFVTVHVRDANDNQPSMTVIFLSADGSPQVSEAAPPGQLVARISVSDPDDGDFAHVNVSLEGGEGHFALSTQDSVIYLVCVARRLDREERDAYNLRVTATDSGSPPLRAEAAFVLHVTDVNDNAPAFDRQLYRPEPLPEVALPGSFVVRVTARDPDQGTNGQVTYSLAPGAHTHWFSIDPTSGIITTAASLDYELEPQPQLIVVATDGGLPPLASSATVSVALQDVNDNEPQFQRTFYNASLPEGTQPGTCFLQVTATDADSGPFGLLSYSLGAGLGSSGSPPFRIDAHSGDVCTTRTLDRDQGPSSFDFTVTAVDGGGLKSMVYVKVFLSDENDNPPQFYPREYAASISAQSPPGTAVLRLRAHDPDQGSHGRLSYHILAGNSPPLFTLDEQSGLLTVAWPLARRANSVVQLEIGAEDGGGLQAEPSARVDISIVPGTPTPPIFEQLQYVFSVPEDVAPGTSVGIVQAHNPPGRLAPVTLSLSGGDPRGLFSLDAVSGLLQTLRPLDRELLGPVLELEVRAGSGVPPAFAVARVRVLLDDVNDNSPAFPAPEDTVLLPPNTAPGTPIYTLRALDPDSGVNSRVTFTLLAGGGGAFTVDPTTGHVRLMRPLGPSGGPAHELELEARDGGSPPRTSHFRLRVVVQDVGTRGLAPRFNSPTYRVDLPSGTTAGTQVLQVQAQAPDGGPITYHLAAEGASSPFGLEPQSGWLWVRAALDREAQELYILKVMAVSGSKAELGQQTGTATVRVSILNQNEHSPRLSEDPTFLAVAENQPPGTSVGRVFATDRDSGPNGRLTYSLQQLSEDSKAFRIHPQTGEVTTLQTLDREQQSSYQLLVQVQDGGSPPRSTTGTVHVAVLDLNDNSPTFLQASGAAGGGLPIQVPDRVPPGTLVTTLQAKDPDEGENGTILYTLTGPGSELFSLHPHSGELLTAAPLIRAERPHYVLTLSAHDQGSPPRSASLQLLVQVLPSARLAEPPPDLAERDPAAPVPVVLTVTAAEGLRPGSLLGSVAAPEPAGVGALTYTLVGGADPEGTFALDAASGRLYLARPLDFEAGPPWRALTVRAEGPGGAGARLLRVQVQVQDENEHAPAFARDPLALALPENPEPGAALYTFRASDADGPGPNSDVRYRLLRQEPPVPALRLDARTGALSAPRGLDRETTPALLLLVEATDRPANASRRRAARVSARVFVTDENDNAPVFASPSRVRLPEDQPPGPAALHVVARDPDLGEAARVSYRLASGGDGHFRLHSSTGALSVVRPLDREQRAEHVLTVVASDHGSPPRSATQVLTVSVADVNDEAPTFQQQEYSVLLRENNPPGTSLLTLRATDPDVGANGQVTYGGVSSESFSLDPDTGVLTTLRALDREEQEEINLTVYAQDRGSPPQLTHVTVRVAVEDENDHAPTFGSAHLSLEVPEGQDPQTLTMLRASDPDVGANGQLQYRILDGDPSGAFVLDLASGEFGTMRPLDREVEPAFQLRIEARDGGQPALSATLLLTVTVLDANDHAPAFPVPAYSVEVPEDVPAGTLLLQLQAHDPDAGANGHVTYYLGAGTAGAFLLEPSSGELRTAAALDREQCPSYTFSVSAVDGAAAGPLSTTVSVTITVRDVNDHAPTFPTSPLRLRLPRPGPSFSTPTLALATLRAEDRDAGANASILYRLAGTPPPGTTVDSYTGEIRVARSPVALGPRDRVLFIVATDLGRPARSATGVIIVGLQGEAERGPRFPRASSEATIRENAPPGTPIVSPRAVHAGGTNGPITYSILSGNEKGTFSIQPSTGAITVRSAEGLDFEVSPRLRLVLQAESGGAFAFTVLTLTLQDANDNAPRFLRPHYVAFLPESRPLEGPLLQVEADDLDQGSGGQISYSLAASQPARGLFHVDPTTGTITTTAILDREIWAETRLVLMATDRGSPALVGSATLTVMVIDTNDNRPTIPQPWELRVSEDALLGSEIAQVTGNDVDSGPVLWYVLSPSGPQDPFSVGRYGGRVSLTGPLDFEQCDRYQLQLLAHDGPHEGRANLTVLVEDVNDNAPAFSQSLYQVMLLEHTPPGSAILSVSATDRDSGANGHISYHLASPADGFSVDPNNGTLFTIVGTVALGHDGSGAVDVVLEARDHGAPGRAARATVHVQLQDQNDHAPSFTLSHYRVAVTEDLPPGSTLLTLEATDADGSRSHAAVDYSIISGNWGRVFQLEPRLAEAGESAGPGPRALGCLVLLEPLDFESLTQYNLTVAAADRGQPPQSSVVPVTVTVLDVNDNPPVFTRASYRVTVPEDTPVGAELLHVEASDADPGPHGLVRFTVSSGDPSGLFELDESSGTLRLAHALDCETQARHQLVVQAADPAGAHFALAPVTIEVQDVNDHGPAFPLNLLSTSVAENQPPGTLVTTLHAIDGDAGAFGRLRYSLLEAGPGPEGREAFALNSSTGELRARVPFDYEHTESFRLLVGAADAGNLSASVTVSVLVTGEDEYDPVFLAPAFHFQVPEGARRGHSLGHVQATDEDGGADGLVLYSLATSSPYFGINQTTGALYLRVDSRAPGSGTATSGGGGRTRREAPRELRLEVIARGPLPGSRSATVPVTVDITHTALGLAPDLNLLLVGAVAASLGVVVVLALAALVLGLVRARSRKAEAAPGPMSQAAPLASDSLQKLGREPPSPPPSEHLYHQTLPSYGGPGAGGPYPRGGSLDPSHSSGRGSAEAAEDDEIRMINEFPRVASVASSLAARGPDSGIQQDADGLSDTSCEPPAPDTWYKGRKAGLLLPGAGATLYREEGPPATATAFLGGCGLSPAPTGDYGFPADGKPCVAGALTAIVAGEEELRGSYNWDYLLSWCPQFQPLASVFTEIARLKDEARPCPPAPRIDPPPLITAVAHPGAKSVPPKPANTAAARAIFPPASHRSPISHEGSLSSAAMSPSFSPSLSPLAARSPVVSPFGVAQGPSASALSAESGLEPPDDTELHI.

The first 42 residues, 1–42, serve as a signal peptide directing secretion; it reads MQKELGIVPSCPGMKSPRPHLLLPLLLLLLLLLGAGVPGAWG. Cadherin domains lie at 43-143, 144-255, 256-362, 367-472, 474-578, 579-685, 686-790, 791-894, 895-1000, 1001-1111, 1112-1211, 1218-1324, 1333-1436, 1437-1546, 1547-1649, 1650-1751, 1752-1855, 1856-1960, 1965-2068, 2069-2171, 2172-2277, 2278-2376, 2377-2482, 2483-2602, 2603-2706, 2707-2813, and 2814-2933; these read QAGS…APAF, PQAR…APAF, NQSR…QPSM, LSAD…APAF, RQLY…EPQF, QRTF…PPQF, YPRE…PPIF, EQLQ…SPAF, PAPE…APRF, NSPT…DPTF, LAVA…SPTF, AGGG…PPDL, VPVV…APAF, ARDP…APVF, ASPS…APTF, QQQE…APTF, GSAH…APAF, PVPA…APTF, LRLR…GPRF, PRAS…APRF, LRPH…RPTI, PQPW…APAF, SQSL…APSF, TLSH…PPVF, TRAS…GPAF, PLNL…DPVF, and LAPA…APDL. The Extracellular portion of the chain corresponds to 43–2940; sequence QAGSLDLQID…PDLNLLLVGA (2898 aa). Residues N217, N256, and N402 are each glycosylated (N-linked (GlcNAc...) asparagine). N584 carries an N-linked (GlcNAc...) asparagine glycan. An N-linked (GlcNAc...) asparagine glycan is attached at N1249. N-linked (GlcNAc...) asparagine glycosylation is present at N1521. N-linked (GlcNAc...) asparagine glycosylation is present at N1718. N-linked (GlcNAc...) asparagine glycosylation occurs at N1996. Positions 2065–2094 are disordered; the sequence is GPRFPRASSEATIRENAPPGTPIVSPRAVH. N-linked (GlcNAc...) asparagine glycosylation is found at N2361, N2428, and N2569. Residues N2761, N2792, and N2862 are each glycosylated (N-linked (GlcNAc...) asparagine). A helical transmembrane segment spans residues 2941-2961; it reads VAASLGVVVVLALAALVLGLV. Residues 2962 to 3298 are Cytoplasmic-facing; the sequence is RARSRKAEAA…EPPDDTELHI (337 aa). The segment at 2986–3040 is disordered; it reads LQKLGREPPSPPPSEHLYHQTLPSYGGPGAGGPYPRGGSLDPSHSSGRGSAEAAE. The segment covering 3011–3020 has biased composition (gly residues); that stretch reads GGPGAGGPYP. S3055 carries the post-translational modification Phosphoserine. Disordered stretches follow at residues 3062–3082 and 3233–3298; these read ARGPDSGIQQDADGLSDTSCE and ASHR…ELHI. 2 stretches are compositionally biased toward low complexity: residues 3244-3266 and 3276-3289; these read SLSSAAMSPSFSPSLSPLAARSP and GPSASALSAESGLE.

As to quaternary structure, heterophilic interaction with FAT4; this interaction affects their respective protein levels. Expressed in fibroblasts but not in melanocytes or keratinocytes.

It localises to the cell membrane. Functionally, calcium-dependent cell-adhesion protein. Mediates functions in neuroprogenitor cell proliferation and differentiation. In the heart, has a critical role for proper morphogenesis of the mitral valve, acting in the regulation of cell migration involved in valve formation. This is Protocadherin-16 (DCHS1) from Homo sapiens (Human).